The sequence spans 519 residues: Protein tweety homolog 1 (519 aa).

Residues 1–42 (MTFASFLINFYSVIPRLNFKFHWTNDVFNLEWSSEYFQALAL) lie on the Extracellular side of the membrane. A helical membrane pass occupies residues 43 to 63 (VACLGAAVSLLLLVTIIIVWI). Over 64-82 (CQACHKNETTGKTRRRVRR) the chain is Cytoplasmic. The helical transmembrane segment at 83-103 (LSTVLFIISVLCFFMLGVCLF) threads the bilayer. Topologically, residues 104–217 (ANEHVNRGMS…VLSLYESERW (114 aa)) are extracellular. 3 N-linked (GlcNAc...) asparagine glycosylation sites follow: Asn-142, Asn-163, and Asn-176. A helical membrane pass occupies residues 218-238 (AFLVILLSITMVVLFTGVVAF). Residues 239–245 (CKQSKKG) are Cytoplasmic-facing. The helical transmembrane segment at 246–266 (AVVFSAIGFFIFVVVWLLISI) threads the bilayer. At 267-395 (SLPLTIALAD…GTCNQSVAGM (129 aa)) the chain is on the extracellular side. N-linked (GlcNAc...) asparagine glycosylation is found at Asn-328, Asn-341, Asn-348, and Asn-389. A helical transmembrane segment spans residues 396-416 (SIYMLSILLLGVFLFILLIVV). Over 417-519 (SKTWNLFSRL…YNNYEDRYNM (103 aa)) the chain is Cytoplasmic. The tract at residues 459–485 (YNPRTRDRTEPSTNTTSGTADEPNAPL) is disordered.

The protein belongs to the tweety family.

The protein resides in the cell membrane. Its function is as follows. Probable chloride channel. This chain is Protein tweety homolog 1 (ttyh-1), found in Caenorhabditis elegans.